The sequence spans 156 residues: Small ribosomal subunit protein uS7 (156 aa).

In terms of assembly, part of the 30S ribosomal subunit. Contacts proteins S9 and S11. Binds to the C-terminus of IF3 and to the C-terminus of Era.

In terms of biological role, one of the primary rRNA binding proteins, it binds directly to 3'-end of the 16S rRNA where it nucleates assembly of the head domain of the 30S subunit. Is located at the subunit interface close to the decoding center. Binds mRNA and the E site tRNA blocking its exit path in the ribosome. This blockage implies that this section of the ribosome must be able to move to release the deacetylated tRNA. This Thermus thermophilus (strain ATCC 27634 / DSM 579 / HB8) protein is Small ribosomal subunit protein uS7 (rpsG).